A 252-amino-acid polypeptide reads, in one-letter code: NAD(P)H-quinone oxidoreductase subunit K (252 aa).

[4Fe-4S] cluster contacts are provided by Cys73, Cys74, Cys138, and Cys169. A compositionally biased stretch (polar residues) spans 225-236 (ASTQKQALSPSQ). The tract at residues 225 to 252 (ASTQKQALSPSQEIPLEDQNEATKEIAQ) is disordered.

It belongs to the complex I 20 kDa subunit family. NDH-1 can be composed of about 15 different subunits; different subcomplexes with different compositions have been identified which probably have different functions. Requires [4Fe-4S] cluster as cofactor.

Its subcellular location is the cellular thylakoid membrane. It catalyses the reaction a plastoquinone + NADH + (n+1) H(+)(in) = a plastoquinol + NAD(+) + n H(+)(out). The catalysed reaction is a plastoquinone + NADPH + (n+1) H(+)(in) = a plastoquinol + NADP(+) + n H(+)(out). NDH-1 shuttles electrons from an unknown electron donor, via FMN and iron-sulfur (Fe-S) centers, to quinones in the respiratory and/or the photosynthetic chain. The immediate electron acceptor for the enzyme in this species is believed to be plastoquinone. Couples the redox reaction to proton translocation, and thus conserves the redox energy in a proton gradient. Cyanobacterial NDH-1 also plays a role in inorganic carbon-concentration. The sequence is that of NAD(P)H-quinone oxidoreductase subunit K from Prochlorococcus marinus (strain MIT 9211).